The sequence spans 310 residues: tRNA pseudouridine synthase B (310 aa).

Aspartate 37 (nucleophile) is an active-site residue.

This sequence belongs to the pseudouridine synthase TruB family. Type 1 subfamily.

It catalyses the reaction uridine(55) in tRNA = pseudouridine(55) in tRNA. Responsible for synthesis of pseudouridine from uracil-55 in the psi GC loop of transfer RNAs. This chain is tRNA pseudouridine synthase B, found in Deinococcus deserti (strain DSM 17065 / CIP 109153 / LMG 22923 / VCD115).